Consider the following 399-residue polypeptide: Tryptophan synthase beta chain (399 aa).

Lysine 92 carries the post-translational modification N6-(pyridoxal phosphate)lysine.

This sequence belongs to the TrpB family. As to quaternary structure, tetramer of two alpha and two beta chains. Requires pyridoxal 5'-phosphate as cofactor.

The catalysed reaction is (1S,2R)-1-C-(indol-3-yl)glycerol 3-phosphate + L-serine = D-glyceraldehyde 3-phosphate + L-tryptophan + H2O. It functions in the pathway amino-acid biosynthesis; L-tryptophan biosynthesis; L-tryptophan from chorismate: step 5/5. Functionally, the beta subunit is responsible for the synthesis of L-tryptophan from indole and L-serine. This is Tryptophan synthase beta chain from Bordetella pertussis (strain Tohama I / ATCC BAA-589 / NCTC 13251).